Consider the following 365-residue polypeptide: Inositol 4-methyltransferase (365 aa).

D232 lines the S-adenosyl-L-methionine pocket. Residue H270 is the Proton acceptor of the active site.

It belongs to the class I-like SAM-binding methyltransferase superfamily. Cation-independent O-methyltransferase family. In terms of tissue distribution, leaves and roots. The levels found in the leaves are 25 times greater than in the roots.

The catalysed reaction is myo-inositol + S-adenosyl-L-methionine = 1D-4-O-methyl-myo-inositol + S-adenosyl-L-homocysteine + H(+). It functions in the pathway polyol metabolism; myo-inositol metabolism. In terms of biological role, catalyzes the methylation of myo-inositol into ononitol (1D-4-O-methyl myo-inositol), the first step in the biosynthesis of the cyclic sugar pinitol which has osmoprotective properties. The sequence is that of Inositol 4-methyltransferase (IMT1) from Mesembryanthemum crystallinum (Common ice plant).